Reading from the N-terminus, the 370-residue chain is Putative phosphoserine aminotransferase (370 aa).

The tract at residues Met-1 to Ser-22 is disordered. Arg-44 contacts L-glutamate. Positions 102, 148, 170, and 193 each coordinate pyridoxal 5'-phosphate. Lys-194 carries the post-translational modification N6-(pyridoxal phosphate)lysine. Residue Asn-245 to Thr-246 coordinates pyridoxal 5'-phosphate.

It belongs to the class-V pyridoxal-phosphate-dependent aminotransferase family. SerC subfamily. Homodimer. Requires pyridoxal 5'-phosphate as cofactor.

The protein resides in the cytoplasm. It carries out the reaction O-phospho-L-serine + 2-oxoglutarate = 3-phosphooxypyruvate + L-glutamate. The catalysed reaction is 4-(phosphooxy)-L-threonine + 2-oxoglutarate = (R)-3-hydroxy-2-oxo-4-phosphooxybutanoate + L-glutamate. It participates in amino-acid biosynthesis; L-serine biosynthesis; L-serine from 3-phospho-D-glycerate: step 2/3. The protein operates within cofactor biosynthesis; pyridoxine 5'-phosphate biosynthesis; pyridoxine 5'-phosphate from D-erythrose 4-phosphate: step 3/5. Its function is as follows. Catalyzes the reversible conversion of 3-phosphohydroxypyruvate to phosphoserine and of 3-hydroxy-2-oxo-4-phosphonooxybutanoate to phosphohydroxythreonine. The sequence is that of Putative phosphoserine aminotransferase from Mycobacterium sp. (strain JLS).